The sequence spans 687 residues: UvrABC system protein C (687 aa).

The region spanning 16–95 is the GIY-YIG domain; sequence TEPGVYKFRD…IKKFDPHFNV (80 aa). In terms of domain architecture, UVR spans 208 to 243; it reads DSVVRRLTNEMISASEALDFEKAARKRDDLNAVRKI.

Belongs to the UvrC family. In terms of assembly, interacts with UvrB in an incision complex.

It is found in the cytoplasm. Its function is as follows. The UvrABC repair system catalyzes the recognition and processing of DNA lesions. UvrC both incises the 5' and 3' sides of the lesion. The N-terminal half is responsible for the 3' incision and the C-terminal half is responsible for the 5' incision. This Corynebacterium diphtheriae (strain ATCC 700971 / NCTC 13129 / Biotype gravis) protein is UvrABC system protein C.